The sequence spans 246 residues: Ribonuclease PH (246 aa).

Phosphate-binding positions include Arg-91 and Gly-129–Arg-131.

The protein belongs to the RNase PH family. Homohexameric ring arranged as a trimer of dimers.

It carries out the reaction tRNA(n+1) + phosphate = tRNA(n) + a ribonucleoside 5'-diphosphate. Functionally, phosphorolytic 3'-5' exoribonuclease that plays an important role in tRNA 3'-end maturation. Removes nucleotide residues following the 3'-CCA terminus of tRNAs; can also add nucleotides to the ends of RNA molecules by using nucleoside diphosphates as substrates, but this may not be physiologically important. Probably plays a role in initiation of 16S rRNA degradation (leading to ribosome degradation) during starvation. The protein is Ribonuclease PH of Paraburkholderia phymatum (strain DSM 17167 / CIP 108236 / LMG 21445 / STM815) (Burkholderia phymatum).